The chain runs to 507 residues: CWF19-like protein DRN1 (507 aa).

Ser242 bears the Phosphoserine mark.

It belongs to the CWF19 family. Interacts with DBR1. Interacts with SYF1, a component of the NTC complex. Interacts with lariat-introns and lariat-intermediates.

It localises to the nucleus. It is found in the cytoplasm. Functionally, involved in branched RNA metabolism, modulating the turnover of lariat-intron pre-mRNAs by the lariat-debranching enzyme DBR1. Enhances the debranching activity of DBR1 in vitro. This is CWF19-like protein DRN1 (DRN1) from Saccharomyces cerevisiae (strain ATCC 204508 / S288c) (Baker's yeast).